An 89-amino-acid polypeptide reads, in one-letter code: Small ribosomal subunit protein uS19 (89 aa).

This sequence belongs to the universal ribosomal protein uS19 family.

Functionally, protein S19 forms a complex with S13 that binds strongly to the 16S ribosomal RNA. This is Small ribosomal subunit protein uS19 from Stenotrophomonas maltophilia (strain K279a).